The sequence spans 221 residues: Probable GTP-binding protein EngB (221 aa).

The EngB-type G domain maps to 32 to 205 (GIPQIAFAGR…RKIVDSLITT (174 aa)). Residues 40–47 (GRSNAGKS), 67–71 (GKTKL), 85–88 (DLPG), 152–155 (TKID), and 184–186 (VSN) each bind GTP. Mg(2+) is bound by residues S47 and T69.

Belongs to the TRAFAC class TrmE-Era-EngA-EngB-Septin-like GTPase superfamily. EngB GTPase family. Mg(2+) serves as cofactor.

Its function is as follows. Necessary for normal cell division and for the maintenance of normal septation. This Leptospira borgpetersenii serovar Hardjo-bovis (strain JB197) protein is Probable GTP-binding protein EngB.